Here is a 207-residue protein sequence, read N- to C-terminus: Ribosomal RNA large subunit methyltransferase E (207 aa).

Positions 49, 51, 69, 87, and 111 each coordinate S-adenosyl-L-methionine. Residue Lys-151 is the Proton acceptor of the active site.

Belongs to the class I-like SAM-binding methyltransferase superfamily. RNA methyltransferase RlmE family.

It localises to the cytoplasm. The enzyme catalyses uridine(2552) in 23S rRNA + S-adenosyl-L-methionine = 2'-O-methyluridine(2552) in 23S rRNA + S-adenosyl-L-homocysteine + H(+). In terms of biological role, specifically methylates the uridine in position 2552 of 23S rRNA at the 2'-O position of the ribose in the fully assembled 50S ribosomal subunit. This Oleidesulfovibrio alaskensis (strain ATCC BAA-1058 / DSM 17464 / G20) (Desulfovibrio alaskensis) protein is Ribosomal RNA large subunit methyltransferase E.